A 373-amino-acid chain; its full sequence is Enoyl-[acyl-carrier-protein] reductase, mitochondrial (373 aa).

The N-terminal 53 residues, 1 to 53 (MLVSQRVTGARARAPQLAGLLEAWYRHGRTTSSYSALSEPSRVRALVYGNHGD), are a transit peptide targeting the mitochondrion. Lys61 carries the N6-acetyllysine; alternate modification. Lys61 carries the post-translational modification N6-succinyllysine; alternate. The active-site Proton donor is Tyr94. NADP(+) contacts are provided by residues Asn167, 193–196 (NSGV), and 216–218 (RDR). Lys252 and Lys267 each carry N6-acetyllysine; alternate. N6-succinyllysine; alternate occurs at positions 252 and 267. Residues 285–288 (YGGM) and 310–312 (FWL) each bind NADP(+). Lys316 carries the post-translational modification N6-succinyllysine. Lys368 contacts NADP(+).

This sequence belongs to the zinc-containing alcohol dehydrogenase family. Quinone oxidoreductase subfamily. As to quaternary structure, homodimer. In terms of tissue distribution, expressed in Purkinje cells (at protein level).

Its subcellular location is the mitochondrion. The catalysed reaction is a 2,3-saturated acyl-[ACP] + NADP(+) = a (2E)-enoyl-[ACP] + NADPH + H(+). The enzyme catalyses (2E)-butenoyl-[ACP] + NADPH + H(+) = butanoyl-[ACP] + NADP(+). It carries out the reaction (2E)-hexenoyl-[ACP] + NADPH + H(+) = hexanoyl-[ACP] + NADP(+). It catalyses the reaction (2E)-octenoyl-[ACP] + NADPH + H(+) = octanoyl-[ACP] + NADP(+). The catalysed reaction is (2E)-decenoyl-[ACP] + NADPH + H(+) = decanoyl-[ACP] + NADP(+). The enzyme catalyses (2E)-dodecenoyl-[ACP] + NADPH + H(+) = dodecanoyl-[ACP] + NADP(+). It carries out the reaction (2E)-tetradecenoyl-[ACP] + NADPH + H(+) = tetradecanoyl-[ACP] + NADP(+). It catalyses the reaction (2E)-hexadecenoyl-[ACP] + NADPH + H(+) = hexadecanoyl-[ACP] + NADP(+). In terms of biological role, catalyzes the NADPH-dependent reduction of trans-2-enoyl thioesters in mitochondrial fatty acid synthesis (fatty acid synthesis type II). Fatty acid chain elongation in mitochondria uses acyl carrier protein (ACP) as an acyl group carrier, but the enzyme accepts both ACP and CoA thioesters as substrates in vitro. Displays a preference for medium-chain over short- and long-chain substrates. May provide the octanoyl chain used for lipoic acid biosynthesis, regulating protein lipoylation and mitochondrial respiratory activity particularly in Purkinje cells. Involved in iron homeostasis; affecting Fe-S cluster assembly and ceramide metabolism. Required for proper morphology and bioenergetic functions of mitochondria. Required for maintenance of neurons. The sequence is that of Enoyl-[acyl-carrier-protein] reductase, mitochondrial (Mecr) from Mus musculus (Mouse).